A 107-amino-acid polypeptide reads, in one-letter code: Universal stress protein B homolog (107 aa).

2 helical membrane-spanning segments follow: residues 6–26 (IILF…LTAL) and 86–106 (VREL…AAFL).

The protein belongs to the universal stress protein B family.

It is found in the cell inner membrane. This Vibrio vulnificus (strain CMCP6) protein is Universal stress protein B homolog.